Here is a 328-residue protein sequence, read N- to C-terminus: Transcription factor bHLH25 (328 aa).

The segment at 125–152 (PHQKSDEFNRKGTKRAQPFSRNQSNAQD) is disordered. The bHLH domain occupies 148–197 (SNAQDHIIAERKRREKLTQRFVALSALVPGLKKMDKASVLGDALKHIKYL).

Homodimer. Expressed in flowers.

It is found in the nucleus. The polypeptide is Transcription factor bHLH25 (BHLH25) (Arabidopsis thaliana (Mouse-ear cress)).